Reading from the N-terminus, the 583-residue chain is MEAAKVYTQDGTVDLQGRPVLASKTGRWRACSFLLGYEAFERMAFYGIASNLVNYLTKRLHEDTISSVRNVNNWSGAVWITPIAGAYIADSYIGRFWTFTASSLIYVLGMILLTMAVTVKSLRPTCENGVCNKASSLQVTFFYISLYTIAIGAGGTKPNISTFGADQFDSYSIEEKKQKVSFFNWWMFSSFLGALFATLGLVYIQENLGWGLGYGIPTVGLLVSLVVFYIGTPFYRHKVIKTDNLAKDLVQVPIAAFKNRKLQCPDDHLELYELDSHYYKSNGKHQVHHTPVFRFLDKAAIKTSSRVPCTVTKVEVAKRVLGLIFIWLVTLIPSTLWAQVNTLFVKQGTTLDRKIGSNFQIPAASLGSFVTLSMLLSVPMYDQSFVPFMRKKTGNPRGITLLQRLGVGFAIQIVAIAIASAVEVKRMRVIKEFHITSPTQVVPMSIFWLLPQYSLLGIGDVFNAIGLLEFFYDQSPEEMQSLGTTFFTSGIGLGNFLNSFLVTMIDKITSKGGGKSWIGNNLNDSRLDYYYGFLVVISIVNMGLFVWAASKYVYKSDDDTKEFSGGGCVQMEAKALDTSPLSI.

A helical transmembrane segment spans residues 74-94 (WSGAVWITPIAGAYIADSYIG). At threonine 98 the chain carries Phosphothreonine. Transmembrane regions (helical) follow at residues 99-119 (FTAS…AVTV), 134-154 (ASSL…IGAG), 182-202 (FFNW…LGLV), 210-230 (WGLG…VFYI), 320-340 (VLGL…WAQV), 361-381 (IPAA…VPMY), 405-425 (LGVG…VEVK), 446-466 (IFWL…NAIG), 485-505 (TFFT…VTMI), and 529-549 (YYYG…VWAA).

This sequence belongs to the major facilitator superfamily. Proton-dependent oligopeptide transporter (POT/PTR) (TC 2.A.17) family. As to expression, expressed in flowers. Detected in stems, leaves and siliques.

The protein localises to the membrane. This Arabidopsis thaliana (Mouse-ear cress) protein is Protein NRT1/ PTR FAMILY 5.1 (NPF5.1).